The sequence spans 121 residues: D-ornithine 4,5-aminomutase subunit alpha (121 aa).

In terms of assembly, heterotetramer of 2 alpha (OraS) and 2 beta (OraE) subunits.

It carries out the reaction D-ornithine = (2R,4S)-2,4-diaminopentanoate. Increased activity in the presence of dithiothreitol (DTT) in vitro. Inhibited by 1 mM potassium phosphate and potassium chloride. Inhibited by L-alpha-ornithine, D,L-alpha-lysine, L-beta-lysine (50%-60%), L-alpha-lysine (26%) and by delta-amino-n-valeric acid to a lesser extent. Significant decrease in activity is observed in the presence of 0.2 mM p-chloromercuribenzoate, N-ethylmaleimide and also by 2 mM iodoacetate to a lesser extent but not inhibited by arsenite. Its function is as follows. Component of a complex that catalyzes the reversible migration of the omega amino group of D-ornithine to C-4 to form (2R,4S)-2,4-diaminopentanoic acid. The role of OraS remains obscure; however, it seems to be required for a correct folding of the OraE subunit. The complex is active only on D-ornithine and 2,4-diaminopentanoic acid and not active on L-ornithine, L-beta-lysine, L-alpha-lysine or D-alpha-lysine. The sequence is that of D-ornithine 4,5-aminomutase subunit alpha (oraS) from Acetoanaerobium sticklandii (strain ATCC 12662 / DSM 519 / JCM 1433 / CCUG 9281 / NCIMB 10654 / HF) (Clostridium sticklandii).